Consider the following 319-residue polypeptide: Acetyl esterase (319 aa).

The Involved in the stabilization of the negatively charged intermediate by the formation of the oxyanion hole motif lies at 91 to 93; sequence HGG. Catalysis depends on residues Ser165, Asp262, and His292.

This sequence belongs to the 'GDXG' lipolytic enzyme family. In terms of assembly, homodimer. Interacts with MalT and MelA.

The protein resides in the cytoplasm. In terms of biological role, displays esterase activity towards short chain fatty esters (acyl chain length of up to 8 carbons). Able to hydrolyze triacetylglycerol (triacetin) and tributyrylglycerol (tributyrin), but not trioleylglycerol (triolein) or cholesterol oleate. Negatively regulates MalT activity by antagonizing maltotriose binding. Inhibits MelA galactosidase activity. The protein is Acetyl esterase of Escherichia coli (strain ATCC 8739 / DSM 1576 / NBRC 3972 / NCIMB 8545 / WDCM 00012 / Crooks).